The sequence spans 553 residues: Expansin-like protein 7 (553 aa).

An N-terminal signal peptide occupies residues 1–19 (MRLLGSLILTLSLIASAFS). N39 carries an N-linked (GlcNAc...) asparagine glycan. The 99-residue stretch at 41-139 (SGSCEYGAYN…RKVSCDASGP (99 aa)) folds into the Expansin-like EG45 domain. Disulfide bonds link C44/C73 and C76/C134. 3 N-linked (GlcNAc...) asparagine glycosylation sites follow: N276, N325, and N406. Disordered regions lie at residues 421 to 447 (GGSGASGVATSSHTGVSSSSSTASSTA) and 460 to 531 (SSSA…DEHH). 2 stretches are compositionally biased toward low complexity: residues 460-476 (SSSASSTSVSSTTAGGK) and 484-493 (ISTSGITGSG). Over residues 497–516 (AASTSKTTSNPTGKTTGMTG) the composition is skewed to polar residues. A compositionally biased stretch (basic and acidic residues) spans 520 to 531 (DHSESHSSDEHH).

The protein belongs to the expansin family. Expansin A subfamily.

Its subcellular location is the secreted. Its function is as follows. May serve to lubricate the movement of the cellulose microfibrils during cell growth and wall extension and/or may serve to maintain the fluid state of the slug cell wall. Overexpression shows aberrant stalk formation. The polypeptide is Expansin-like protein 7 (expl7) (Dictyostelium discoideum (Social amoeba)).